We begin with the raw amino-acid sequence, 316 residues long: MEQNILNSILDKFGDGDQERSDIRHNDSGDENDNHSDHEGNHGNNECCEGNEDGDKEYEVDVEDMTDEQYAQFIQEQQEPKIKSGGNTGVKGVLSDYAEHREKQKQKYLQKKYETQKMLEKMCFTTRDQPPPTEEENQLDSDDDDLERIRKARMEQWKSKQQITSDVKKPEKKVFGYFKQIDSSQYIHEIDNEPPNVFVIIHLFQNYIPECVLLNQQLGQLAVKYRYIKFLKILSKEAKENYHDEALPSLLVYIGGKLLVSFVPLTEELGRNFDQEDLELLLSSYDIIPNPMKAKNSNWETSLSRKRPESDDDNDD.

A disordered region spans residues 1 to 61 (MEQNILNSIL…EDGDKEYEVD (61 aa)). The span at 12-41 (KFGDGDQERSDIRHNDSGDENDNHSDHEGN) shows a compositional bias: basic and acidic residues. Residues 49–61 (EGNEDGDKEYEVD) are compositionally biased toward acidic residues. The 196-residue stretch at 95 to 290 (SDYAEHREKQ…LLSSYDIIPN (196 aa)) folds into the Phosducin domain. Residues 102–156 (EKQKQKYLQKKYETQKMLEKMCFTTRDQPPPTEEENQLDSDDDDLERIRKARMEQ) adopt a coiled-coil conformation. The segment at 175–316 (FGYFKQIDSS…RPESDDDNDD (142 aa)) is thioredoxin fold. A disordered region spans residues 293–316 (KAKNSNWETSLSRKRPESDDDNDD).

Belongs to the phosducin family.

It is found in the cytoplasm. Its function is as follows. Required for normal chemotaxis in response to cAMP and folate. Required for the heterodimerization of the G protein beta and gamma subunits gpbA and gpgA, which is itself thought to be necessary for prenylation of the gamma subunit gpgA and its association with plasma membranes. The chain is Phosducin-like protein 1 (phlp1) from Dictyostelium discoideum (Social amoeba).